Reading from the N-terminus, the 182-residue chain is MESILFIAIAFLINSFISYKITNMQPKIKSRIFKRVKMHYLNLIEGKKAEFDKKAMPILFGFMIIALISFNILLYVVYNCPVSITSIIAEILIIISMIIIWKAFNKEISVYLCDDGIYYSNKFISWKNIENVKKDDGFIVLFGKKKKILGRKLYLLQRIYLKYDEEIENIIKNQIEKFRDKA.

Transmembrane regions (helical) follow at residues 58–78 (ILFG…YVVY) and 81–101 (PVSI…IIIW).

It to M.jannaschii MJ0803.

The protein resides in the cell membrane. This is an uncharacterized protein from Methanocaldococcus jannaschii (strain ATCC 43067 / DSM 2661 / JAL-1 / JCM 10045 / NBRC 100440) (Methanococcus jannaschii).